Reading from the N-terminus, the 675-residue chain is Potassium-transporting ATPase ATP-binding subunit (675 aa).

4 helical membrane passes run 38-58 (VMFV…ANLV), 67-87 (LAIT…EGMA), 216-236 (IALS…VVTL), and 253-273 (IALL…AIGI). Aspartate 304 (4-aspartylphosphate intermediate) is an active-site residue. Residues aspartate 341, glutamate 345, 371–378 (FTAQTRMS), and lysine 389 each bind ATP. Mg(2+) is bound by residues aspartate 512 and aspartate 516. The next 3 membrane-spanning stretches (helical) occupy residues 582–602 (FAIL…LNVM), 610–630 (AVLS…PLAL), and 654–674 (GGIL…GGLM).

The protein belongs to the cation transport ATPase (P-type) (TC 3.A.3) family. Type IA subfamily. As to quaternary structure, the system is composed of three essential subunits: KdpA, KdpB and KdpC.

The protein resides in the cell membrane. It catalyses the reaction K(+)(out) + ATP + H2O = K(+)(in) + ADP + phosphate + H(+). Its function is as follows. Part of the high-affinity ATP-driven potassium transport (or Kdp) system, which catalyzes the hydrolysis of ATP coupled with the electrogenic transport of potassium into the cytoplasm. This subunit is responsible for energy coupling to the transport system and for the release of the potassium ions to the cytoplasm. The protein is Potassium-transporting ATPase ATP-binding subunit of Deinococcus radiodurans (strain ATCC 13939 / DSM 20539 / JCM 16871 / CCUG 27074 / LMG 4051 / NBRC 15346 / NCIMB 9279 / VKM B-1422 / R1).